The following is a 334-amino-acid chain: Glycerol-1-phosphate dehydrogenase [NAD(P)+] (334 aa).

NAD(+)-binding positions include 77–81 and 99–102; these read GRPID and TTAS. Position 104 (D104) interacts with substrate. S108 contributes to the NAD(+) binding site. D147 provides a ligand contact to substrate. Zn(2+)-binding residues include D147 and H225. H229 is a substrate binding site. H246 is a Zn(2+) binding site.

Belongs to the glycerol-1-phosphate dehydrogenase family. Zn(2+) serves as cofactor.

It localises to the cytoplasm. It carries out the reaction sn-glycerol 1-phosphate + NAD(+) = dihydroxyacetone phosphate + NADH + H(+). It catalyses the reaction sn-glycerol 1-phosphate + NADP(+) = dihydroxyacetone phosphate + NADPH + H(+). Its pathway is membrane lipid metabolism; glycerophospholipid metabolism. Its function is as follows. Catalyzes the NAD(P)H-dependent reduction of dihydroxyacetonephosphate (DHAP or glycerone phosphate) to glycerol 1-phosphate (G1P). The G1P thus generated is used as the glycerophosphate backbone of phospholipids in the cellular membranes of Archaea. The sequence is that of Glycerol-1-phosphate dehydrogenase [NAD(P)+] from Methanococcus maripaludis (strain DSM 14266 / JCM 13030 / NBRC 101832 / S2 / LL).